The following is a 50-amino-acid chain: MLYGNCCVKMVKNPGLPYERQCKDDCISQKDIFTPGAAREQNNYEKWTQS.

This is an uncharacterized protein from Saccharomyces cerevisiae (strain ATCC 204508 / S288c) (Baker's yeast).